The primary structure comprises 407 residues: Rubber oxygenase (407 aa).

Residues 1–30 constitute a signal peptide (tat-type signal); it reads MDGFSRRRMLMTGGALGAVGALGAATRALA. Histidine 198 is a heme binding site.

The protein belongs to the rubber oxygenase Lcp family. The cofactor is heme b. In terms of processing, exported by the Tat system. The position of the signal peptide cleavage has not been experimentally proven.

Its subcellular location is the secreted. It functions in the pathway biopolymer metabolism. Functionally, involved in the initial step of rubber degradation. Catalyzes the oxidative C-C cleavage of poly(cis-1,4-isoprene) in synthetic as well as in natural rubber by the addition of oxygen (O2) to the double bonds, leading to a mixture of oligonucleotide-isoprenoids with terminal keto and aldehyde groups (endo-type cleavage). The cleavage products are of different lengths, ranging from C20 (four isoprene units) to higher oligo-isoprenoids. Is not able to cleave low-molecular-weight substrate analogs with isoprenoid structure such as squalene (1,4-trans-isoprenoid), carotenoids, or alpha-tocopherol. In Streptomyces sp. (strain K30), this protein is Rubber oxygenase.